Reading from the N-terminus, the 294-residue chain is Probable enoyl-CoA hydratase echA12 (294 aa).

It belongs to the enoyl-CoA hydratase/isomerase family.

It catalyses the reaction a (3S)-3-hydroxyacyl-CoA = a (2E)-enoyl-CoA + H2O. It carries out the reaction a 4-saturated-(3S)-3-hydroxyacyl-CoA = a (3E)-enoyl-CoA + H2O. In terms of biological role, could possibly oxidize fatty acids using specific components. This chain is Probable enoyl-CoA hydratase echA12 (echA12), found in Mycobacterium leprae (strain TN).